Reading from the N-terminus, the 663-residue chain is MTKQTLSFQAEVAQLLHLVTHSLYSNKEIFLRELISNASDACDKLRYEAINDSGLYEDAPTLEVRVSFDPAAKTLTISDNGIGMSAQEAIDHLGTIAKSGTKDFVSKLSGDQKADSQLIGQFGVGFYSGFIVADKITVESRRAGMKASEGVRWISGGAGDFEVETIERAARGTSVILHLRDDAMDYCSAWKLKSIINKYSDHISLPILMEKEEWKDGELINPSDEKGGRQPGGMVKTGEWETVNKGNAIWARAKKDITPEQYTEFYKQISHDFEAPLAYTHNRVEGSTEYTQLLYLPSKAPMDLFNREKSAGVKLYVKRVFIMDDAEALLPTYLRFVKGVVDSADLPLNVSRELLQESRDVKAIREGCTKRVLGMLEDLAKHDKLPAPSADGGTDTTAGVSDVLSEEDKANEGKYSKFYAEFGAVLKEGLGEDYANKDRLAKLLRFASSSTDTVSVSFADYKARMKEGQEAIYYITADTPAAAKNSPQLEVFKKKGIEVLLMTDRVDEWALNYLQEFDGTPLQSVAKGAVDLGKLQDEAEKKAAEEAAETFKPLLAKLKEALKDKAEDVRVTTRLVDSPACLVVQDHGMSTQLARMLKQAGQAAPDVKPVLEVNAEHPLVKKLDGSVHFNDLAHILFDQALLAEGGLPADPAAYVKRVNALLV.

An a; substrate-binding region spans residues 1–352 (MTKQTLSFQA…SADLPLNVSR (352 aa)). Residues 218–228 (ELINPSDEKGG) show a composition bias toward basic and acidic residues. The interval 218–237 (ELINPSDEKGGRQPGGMVKT) is disordered. Residues 353-595 (ELLQESRDVK…DHGMSTQLAR (243 aa)) are b. The segment at 596-663 (MLKQAGQAAP…YVKRVNALLV (68 aa)) is c.

The protein belongs to the heat shock protein 90 family. As to quaternary structure, homodimer.

Its subcellular location is the cytoplasm. Its function is as follows. Molecular chaperone. Has ATPase activity. This is Chaperone protein HtpG from Albidiferax ferrireducens (strain ATCC BAA-621 / DSM 15236 / T118) (Rhodoferax ferrireducens).